The following is a 377-amino-acid chain: DNA replication and repair protein RecF (377 aa).

Glycine 30–threonine 37 is an ATP binding site.

This sequence belongs to the RecF family.

The protein resides in the cytoplasm. In terms of biological role, the RecF protein is involved in DNA metabolism; it is required for DNA replication and normal SOS inducibility. RecF binds preferentially to single-stranded, linear DNA. It also seems to bind ATP. The protein is DNA replication and repair protein RecF of Salinispora tropica (strain ATCC BAA-916 / DSM 44818 / JCM 13857 / NBRC 105044 / CNB-440).